The chain runs to 1178 residues: DNA-directed RNA polymerase subunit beta (1178 aa).

Positions 1-37 (MLEGCILPDFGQSKTDVSPSQSRPQSSPNNSVPGAPN) are disordered. Residues 17 to 33 (VSPSQSRPQSSPNNSVP) show a composition bias toward low complexity.

This sequence belongs to the RNA polymerase beta chain family. In terms of assembly, the RNAP catalytic core consists of 2 alpha, 1 beta, 1 beta' and 1 omega subunit. When a sigma factor is associated with the core the holoenzyme is formed, which can initiate transcription.

It carries out the reaction RNA(n) + a ribonucleoside 5'-triphosphate = RNA(n+1) + diphosphate. DNA-dependent RNA polymerase catalyzes the transcription of DNA into RNA using the four ribonucleoside triphosphates as substrates. This chain is DNA-directed RNA polymerase subunit beta, found in Mycobacterium leprae (strain Br4923).